The primary structure comprises 2346 residues: Myomegalin (2346 aa).

Coiled coils occupy residues 41-132 (REDI…LVEA), 162-205 (DQYT…LLEE), 238-318 (DSHL…REML), and 350-684 (CSQL…RQYL). Phosphoserine is present on glutamate 252. Positions 698–732 (NQQAEVTPTGRLGKQTDQGSMQIPSRDDSTSLTAK) are disordered. Threonine 704 is subject to Phosphothreonine. A compositionally biased stretch (basic and acidic residues) spans 722–732 (SRDDSTSLTAK). 6 coiled-coil regions span residues 743 to 936 (GDLD…TLAA), 1002 to 1043 (LQEE…SSVS), 1096 to 1124 (SSLQ…EQLV), 1212 to 1240 (STQH…SEAT), 1346 to 1385 (GKSE…LSVT), and 1431 to 1455 (GLQA…LPKN). The segment at 1193-1214 (DNQSQPRDPGPQSAFSLPGSTQ) is disordered. The span at 1205–1214 (SAFSLPGSTQ) shows a compositional bias: polar residues. In terms of domain architecture, Olduvai spans 1551–1642 (KDHKSEKDQA…EEKKASPSHS (92 aa)). The segment covering 1591–1600 (SLTPSSSHAL) has biased composition (low complexity). 2 disordered regions span residues 1591-1614 (SLTP…SFLS) and 1633-1690 (EEKK…EANQ). A compositionally biased stretch (polar residues) spans 1652 to 1690 (AVLSSKPSSTSASQGAKAESNSNPISLPTPQNTPKEANQ). 2 coiled-coil regions span residues 1736 to 1760 (VVSL…ASTV) and 1840 to 2077 (GADL…QQLE). Disordered stretches follow at residues 2081–2103 (GKAS…PGNK) and 2127–2156 (VFPS…TSPV). The segment covering 2085-2103 (LSPSSINQNFPASTDPGNK) has biased composition (polar residues). The stretch at 2273–2312 (ESTERELLELRTKVSKQERLLQSTTEHLKNANQQKESMEQ) forms a coiled coil.

As to quaternary structure, interacts with PDE4D. Isoform 13 interacts with MAPRE1 and MAPRE3. Isoform 13 forms a pericentrosomal complex with AKAP9, CDK5RAP2 and EB1/MAPRE1; within this complex, may mediate MAPRE1-binding to CDK5RAP2. Interaction of isoform 13 with AKAP9 stabilizes both proteins. Isoform 13 interacts (via N-terminus) with CAMSAP2; this interaction is much stronger in the presence of AKAP9. In complex with AKAP9, Isoform 13 recruits CAMSAP2 to the Golgi apparatus. Isoform 13 interacts with unglycosylated LGALS3BP; this interaction may connect the pericentrosomal complex to the gamma-tubulin ring complex (gamma-TuRC) to promote microtubule assembly and acetylation. As to expression, highly expressed in adult and fetal heart, in skeletal muscle and, to a lower extent, in brain and placenta.

The protein resides in the golgi apparatus. It localises to the cytoplasm. It is found in the cytoskeleton. Its subcellular location is the microtubule organizing center. The protein localises to the centrosome. Functions as an anchor sequestering components of the cAMP-dependent pathway to Golgi and/or centrosomes. In terms of biological role, participates in microtubule dynamics, promoting microtubule assembly. Depending upon the cell context, may act at the level of the Golgi apparatus or that of the centrosome. In complex with AKAP9, recruits CAMSAP2 to the Golgi apparatus and tethers non-centrosomal minus-end microtubules to the Golgi, an important step for polarized cell movement. In complex with AKAP9, EB1/MAPRE1 and CDK5RAP2, contributes to microtubules nucleation and extension from the centrosome to the cell periphery, a crucial process for directed cell migration, mitotic spindle orientation and cell-cycle progression. This Homo sapiens (Human) protein is Myomegalin (PDE4DIP).